The chain runs to 299 residues: Mitochondrial magnesium exporter 1 (299 aa).

Solcar repeat units follow at residues 12–103 (SNPV…GKRL), 112–200 (LTYP…LQEL), and 210–296 (ISTT…TNDL). A run of 4 helical transmembrane segments spans residues 79-99 (ISAP…VYAA), 114-134 (YPQI…VTVP), 216-236 (ILSG…FDVL), and 272-292 (ILPI…GVEL).

It belongs to the mitochondrial carrier (TC 2.A.29) family.

Its subcellular location is the mitochondrion membrane. In terms of biological role, mediates efflux of magnesium ions from mitochondria, suggesting a role in magnesium homeostasis. The sequence is that of Mitochondrial magnesium exporter 1 from Drosophila melanogaster (Fruit fly).